Reading from the N-terminus, the 970-residue chain is Insulin-degrading enzyme-like 1, peroxisomal (970 aa).

His69 serves as a coordination point for Zn(2+). Glu72 acts as the Proton acceptor in catalysis. His73 provides a ligand contact to Zn(2+). Glu143 is a catalytic residue. Glu150 provides a ligand contact to Zn(2+).

This sequence belongs to the peptidase M16 family. Zn(2+) serves as cofactor.

The protein resides in the peroxisome. Its function is as follows. Peptidase that might be involved in pathogen or wound response. Not required for peroxisome biogenesis, indole-3-butyric acid (IBA) metabolism, fatty acid beta-oxidation or degradation of glyoxylate cycle enzymes during seedling development. This Arabidopsis thaliana (Mouse-ear cress) protein is Insulin-degrading enzyme-like 1, peroxisomal (PXM16).